A 317-amino-acid chain; its full sequence is Beta-ketoacyl-[acyl-carrier-protein] synthase III (317 aa).

Active-site residues include C112 and H244. The ACP-binding stretch occupies residues 245–249 (QANLR). Residue N274 is part of the active site.

It belongs to the thiolase-like superfamily. FabH family. Homodimer.

The protein localises to the cytoplasm. It catalyses the reaction malonyl-[ACP] + acetyl-CoA + H(+) = 3-oxobutanoyl-[ACP] + CO2 + CoA. It participates in lipid metabolism; fatty acid biosynthesis. Catalyzes the condensation reaction of fatty acid synthesis by the addition to an acyl acceptor of two carbons from malonyl-ACP. Catalyzes the first condensation reaction which initiates fatty acid synthesis and may therefore play a role in governing the total rate of fatty acid production. Possesses both acetoacetyl-ACP synthase and acetyl transacylase activities. Its substrate specificity determines the biosynthesis of branched-chain and/or straight-chain of fatty acids. This Salmonella paratyphi B (strain ATCC BAA-1250 / SPB7) protein is Beta-ketoacyl-[acyl-carrier-protein] synthase III.